Reading from the N-terminus, the 250-residue chain is Diaminopimelate epimerase (250 aa).

Substrate-binding residues include Asn-11 and Asn-60. Cys-69 serves as the catalytic Proton donor. Substrate is bound by residues 70–71 (GN), Asn-164, and 182–183 (ER). Catalysis depends on Cys-192, which acts as the Proton acceptor. 193–194 (GT) is a substrate binding site.

The protein belongs to the diaminopimelate epimerase family. As to quaternary structure, homodimer.

It localises to the cytoplasm. It carries out the reaction (2S,6S)-2,6-diaminopimelate = meso-2,6-diaminopimelate. It participates in amino-acid biosynthesis; L-lysine biosynthesis via DAP pathway; DL-2,6-diaminopimelate from LL-2,6-diaminopimelate: step 1/1. Its function is as follows. Catalyzes the stereoinversion of LL-2,6-diaminopimelate (L,L-DAP) to meso-diaminopimelate (meso-DAP), a precursor of L-lysine and an essential component of the bacterial peptidoglycan. The polypeptide is Diaminopimelate epimerase (Nitratiruptor sp. (strain SB155-2)).